Consider the following 178-residue polypeptide: Adenine phosphoribosyltransferase (178 aa).

The protein belongs to the purine/pyrimidine phosphoribosyltransferase family. In terms of assembly, homodimer.

It is found in the cytoplasm. The enzyme catalyses AMP + diphosphate = 5-phospho-alpha-D-ribose 1-diphosphate + adenine. It participates in purine metabolism; AMP biosynthesis via salvage pathway; AMP from adenine: step 1/1. Functionally, catalyzes a salvage reaction resulting in the formation of AMP, that is energically less costly than de novo synthesis. The protein is Adenine phosphoribosyltransferase of Erythrobacter litoralis (strain HTCC2594).